Here is a 193-residue protein sequence, read N- to C-terminus: CASP-like protein 1F3 (193 aa).

The interval 1–25 (MASPQNTSQKRFFQANSPGGMPTAS) is disordered. At 1–35 (MASPQNTSQKRFFQANSPGGMPTASQSQRSRILAQ) the chain is on the cytoplasmic side. Residues 36–56 (ITLRFLAIAFTVTAIPVMITA) traverse the membrane as a helical segment. Over 57–78 (KEPVSLLGLAITPSYKQSSAMK) the chain is Extracellular. A helical transmembrane segment spans residues 79 to 99 (FLLGVNATVFAFTALSMLFVW). At 100 to 118 (PLRRSGSKPINYFFLHLHD) the chain is on the cytoplasmic side. A helical membrane pass occupies residues 119–139 (MVMTLLLISGCAAATAVGYLS). Residues 140 to 161 (QYGQPETYWSPICDIVKKFCHQ) lie on the Extracellular side of the membrane. The helical transmembrane segment at 162–182 (MLISTVLSYLAFFCYLALNIL) threads the bilayer. Residues 183–193 (SVHKLMSRATE) lie on the Cytoplasmic side of the membrane.

Belongs to the Casparian strip membrane proteins (CASP) family. As to quaternary structure, homodimer and heterodimers.

Its subcellular location is the cell membrane. The protein is CASP-like protein 1F3 of Populus trichocarpa (Western balsam poplar).